A 130-amino-acid polypeptide reads, in one-letter code: MVRMNVLADALKSINNAEKRGKRQVLIRPCSKVIVRFLTVMMKHGYIGEFEIIDDHRAGKIVVNLTGRLNKCGVISPRFDVQLKDLEKWQNNLFPSRQFGFIVLTTSAGIMDHEEARRKHTGGKILGFFF.

N6-succinyllysine is present on Lys88.

Belongs to the universal ribosomal protein uS8 family. Component of the 40S ribosomal subunit. Part of the small subunit (SSU) processome, composed of more than 70 proteins and the RNA chaperone small nucleolar RNA (snoRNA) U3.

The protein resides in the cytoplasm. Its subcellular location is the nucleus. It is found in the nucleolus. Component of the small ribosomal subunit. Part of the small subunit (SSU) processome, first precursor of the small eukaryotic ribosomal subunit. During the assembly of the SSU processome in the nucleolus, many ribosome biogenesis factors, an RNA chaperone and ribosomal proteins associate with the nascent pre-rRNA and work in concert to generate RNA folding, modifications, rearrangements and cleavage as well as targeted degradation of pre-ribosomal RNA by the RNA exosome. Required for proper erythropoiesis. The protein is Small ribosomal subunit protein uS8 (RPS15A) of Pongo abelii (Sumatran orangutan).